The chain runs to 120 residues: UPF0231 protein YacL (120 aa).

This sequence belongs to the UPF0231 family.

The sequence is that of UPF0231 protein YacL from Salmonella heidelberg (strain SL476).